We begin with the raw amino-acid sequence, 338 residues long: Holliday junction branch migration complex subunit RuvB (338 aa).

The interval 1 to 182 is large ATPase domain (RuvB-L); the sequence is MDDRMVDQSQ…FGVHLRLEYY (182 aa). Residues Leu21, Arg22, Gly63, Lys66, Thr67, Thr68, 129-131, Arg172, Tyr182, and Arg219 each bind ATP; that span reads EDF. Thr67 contacts Mg(2+). Residues 183-253 form a small ATPAse domain (RuvB-S) region; that stretch reads KESELKDIII…TTKRALQLLQ (71 aa). The segment at 256 to 338 is head domain (RuvB-H); that stretch reads DYGLDYIDHK…KNGKRDNFEY (83 aa). Residues Arg292, Arg311, and Arg316 each coordinate DNA.

Belongs to the RuvB family. As to quaternary structure, homohexamer. Forms an RuvA(8)-RuvB(12)-Holliday junction (HJ) complex. HJ DNA is sandwiched between 2 RuvA tetramers; dsDNA enters through RuvA and exits via RuvB. An RuvB hexamer assembles on each DNA strand where it exits the tetramer. Each RuvB hexamer is contacted by two RuvA subunits (via domain III) on 2 adjacent RuvB subunits; this complex drives branch migration. In the full resolvosome a probable DNA-RuvA(4)-RuvB(12)-RuvC(2) complex forms which resolves the HJ.

Its subcellular location is the cytoplasm. The catalysed reaction is ATP + H2O = ADP + phosphate + H(+). Its function is as follows. The RuvA-RuvB-RuvC complex processes Holliday junction (HJ) DNA during genetic recombination and DNA repair, while the RuvA-RuvB complex plays an important role in the rescue of blocked DNA replication forks via replication fork reversal (RFR). RuvA specifically binds to HJ cruciform DNA, conferring on it an open structure. The RuvB hexamer acts as an ATP-dependent pump, pulling dsDNA into and through the RuvAB complex. RuvB forms 2 homohexamers on either side of HJ DNA bound by 1 or 2 RuvA tetramers; 4 subunits per hexamer contact DNA at a time. Coordinated motions by a converter formed by DNA-disengaged RuvB subunits stimulates ATP hydrolysis and nucleotide exchange. Immobilization of the converter enables RuvB to convert the ATP-contained energy into a lever motion, pulling 2 nucleotides of DNA out of the RuvA tetramer per ATP hydrolyzed, thus driving DNA branch migration. The RuvB motors rotate together with the DNA substrate, which together with the progressing nucleotide cycle form the mechanistic basis for DNA recombination by continuous HJ branch migration. Branch migration allows RuvC to scan DNA until it finds its consensus sequence, where it cleaves and resolves cruciform DNA. In Staphylococcus carnosus (strain TM300), this protein is Holliday junction branch migration complex subunit RuvB.